The chain runs to 233 residues: Large ribosomal subunit protein uL2 (233 aa).

The interval 195-233 (PHGGGNHQHVGRPSTVGRNAPPGRKVGRLSPKRRRVNGR) is disordered. Basic residues predominate over residues 219–233 (KVGRLSPKRRRVNGR).

Belongs to the universal ribosomal protein uL2 family. Part of the 50S ribosomal subunit. Forms a bridge to the 30S subunit in the 70S ribosome.

In terms of biological role, one of the primary rRNA binding proteins. Required for association of the 30S and 50S subunits to form the 70S ribosome, for tRNA binding and peptide bond formation. It has been suggested to have peptidyltransferase activity; this is somewhat controversial. Makes several contacts with the 16S rRNA in the 70S ribosome. The protein is Large ribosomal subunit protein uL2 of Thermoplasma acidophilum (strain ATCC 25905 / DSM 1728 / JCM 9062 / NBRC 15155 / AMRC-C165).